The sequence spans 155 residues: Ribosomal RNA large subunit methyltransferase H (155 aa).

S-adenosyl-L-methionine contacts are provided by residues L72, G103, and 122 to 127; that span reads LSDLTL.

Belongs to the RNA methyltransferase RlmH family. In terms of assembly, homodimer.

The protein localises to the cytoplasm. It carries out the reaction pseudouridine(1915) in 23S rRNA + S-adenosyl-L-methionine = N(3)-methylpseudouridine(1915) in 23S rRNA + S-adenosyl-L-homocysteine + H(+). Its function is as follows. Specifically methylates the pseudouridine at position 1915 (m3Psi1915) in 23S rRNA. The protein is Ribosomal RNA large subunit methyltransferase H of Variovorax paradoxus (strain S110).